Reading from the N-terminus, the 329-residue chain is MSELKVDTGRLSHIANSGPMSILAYCASSILMTVTNKCVVGSDKFNMLFVMLFAQSLVCVTALVLLKALGYVQYRPLNKVDVKNWLLISVLLVLMTYTSSRALKYLAVPIYTIFKNLTIILIAYGEVLFFGGRVTAMELSSFLLIVLSSVVATLGDQQALAKKPLAAAVESILGLNVGYFWMFTNCICSALFVLIMRKRIALTKFKDFDTMFYNNILSLPLLMLASFMFEDWGAANIARNLTKDYIIIMIISGLASVGISYCSGWCVRVTSSTTYSMVGALNKLPIALSGLLFFDAPKNFLSIFSIFLGFLSGIVYAVAKQKKQSQPAN.

Over 1 to 13 (MSELKVDTGRLSH) the chain is Cytoplasmic. A helical membrane pass occupies residues 14–34 (IANSGPMSILAYCASSILMTV). The Lumenal segment spans residues 35–44 (TNKCVVGSDK). Residues 45–65 (FNMLFVMLFAQSLVCVTALVL) traverse the membrane as a helical segment. Over 66 to 79 (LKALGYVQYRPLNK) the chain is Cytoplasmic. A helical membrane pass occupies residues 80–100 (VDVKNWLLISVLLVLMTYTSS). Topologically, residues 101 to 109 (RALKYLAVP) are lumenal. The chain crosses the membrane as a helical span at residues 110–130 (IYTIFKNLTIILIAYGEVLFF). Topologically, residues 131–133 (GGR) are cytoplasmic. Residues 134–154 (VTAMELSSFLLIVLSSVVATL) traverse the membrane as a helical segment. The Lumenal portion of the chain corresponds to 155–174 (GDQQALAKKPLAAAVESILG). Residues 175 to 195 (LNVGYFWMFTNCICSALFVLI) form a helical membrane-spanning segment. Over 196-214 (MRKRIALTKFKDFDTMFYN) the chain is Cytoplasmic. A helical membrane pass occupies residues 215–235 (NILSLPLLMLASFMFEDWGAA). Topologically, residues 236–245 (NIARNLTKDY) are lumenal. N-linked (GlcNAc...) asparagine glycosylation is present at Asn-240. A helical transmembrane segment spans residues 246–266 (IIIMIISGLASVGISYCSGWC). At 267–273 (VRVTSST) the chain is on the cytoplasmic side. The helical transmembrane segment at 274–294 (TYSMVGALNKLPIALSGLLFF) threads the bilayer. Topologically, residues 295 to 298 (DAPK) are lumenal. The helical transmembrane segment at 299–319 (NFLSIFSIFLGFLSGIVYAVA) threads the bilayer. At 320–329 (KQKKQSQPAN) the chain is on the cytoplasmic side.

This sequence belongs to the TPT transporter family. SLC35D subfamily. Homooligomer.

It localises to the golgi apparatus membrane. The protein localises to the cytoplasmic vesicle membrane. The protein resides in the endoplasmic reticulum membrane. Involved in the import of GDP-mannose from the cytoplasm into the Golgi lumen. The protein is GDP-mannose transporter (VRG4) of Eremothecium gossypii (strain ATCC 10895 / CBS 109.51 / FGSC 9923 / NRRL Y-1056) (Yeast).